Here is a 405-residue protein sequence, read N- to C-terminus: uncharacterized protein (405 aa).

The N-terminal stretch at 1 to 20 (MKAKLALSIIGLVLASLVAG) is a signal peptide. C21 is subject to N-acetylcysteine. C21 carries the S-archaeol cysteine lipid modification.

The protein belongs to the BMP lipoprotein family.

The protein localises to the cell membrane. This is an uncharacterized protein from Pyrococcus horikoshii (strain ATCC 700860 / DSM 12428 / JCM 9974 / NBRC 100139 / OT-3).